The chain runs to 469 residues: L-seryl-tRNA(Sec) selenium transferase (469 aa).

Lysine 295 carries the N6-(pyridoxal phosphate)lysine modification.

It belongs to the SelA family. Pyridoxal 5'-phosphate is required as a cofactor.

It localises to the cytoplasm. It catalyses the reaction L-seryl-tRNA(Sec) + selenophosphate + H(+) = L-selenocysteinyl-tRNA(Sec) + phosphate. It functions in the pathway aminoacyl-tRNA biosynthesis; selenocysteinyl-tRNA(Sec) biosynthesis; selenocysteinyl-tRNA(Sec) from L-seryl-tRNA(Sec) (bacterial route): step 1/1. Converts seryl-tRNA(Sec) to selenocysteinyl-tRNA(Sec) required for selenoprotein biosynthesis. The polypeptide is L-seryl-tRNA(Sec) selenium transferase (Methylocella silvestris (strain DSM 15510 / CIP 108128 / LMG 27833 / NCIMB 13906 / BL2)).